A 142-amino-acid polypeptide reads, in one-letter code: Large ribosomal subunit protein uL11 (142 aa).

It belongs to the universal ribosomal protein uL11 family. In terms of assembly, part of the ribosomal stalk of the 50S ribosomal subunit. Interacts with L10 and the large rRNA to form the base of the stalk. L10 forms an elongated spine to which L12 dimers bind in a sequential fashion forming a multimeric L10(L12)X complex. Post-translationally, one or more lysine residues are methylated.

Its function is as follows. Forms part of the ribosomal stalk which helps the ribosome interact with GTP-bound translation factors. This is Large ribosomal subunit protein uL11 from Magnetococcus marinus (strain ATCC BAA-1437 / JCM 17883 / MC-1).